Reading from the N-terminus, the 254-residue chain is Pectate lyase E (254 aa).

Positions 1-17 (MYQPLLLLPLLLTSAFA) are cleaved as a signal peptide. The segment at 227 to 254 (TNNNSKEPKKKSSGPSSYCKYSEPLSKC) is disordered. The N-linked (GlcNAc...) asparagine glycan is linked to Asn-229. The segment covering 239–254 (SGPSSYCKYSEPLSKC) has biased composition (low complexity).

It belongs to the polysaccharide lyase 3 family. Ca(2+) is required as a cofactor.

It is found in the secreted. The catalysed reaction is Eliminative cleavage of (1-&gt;4)-alpha-D-galacturonan to give oligosaccharides with 4-deoxy-alpha-D-galact-4-enuronosyl groups at their non-reducing ends.. Pectinolytic enzyme consist of four classes of enzymes: pectin lyase, polygalacturonase, pectin methylesterase and rhamnogalacturonase. Among pectinolytic enzymes, pectin lyase is the most important in depolymerization of pectin, since it cleaves internal glycosidic bonds of highly methylated pectins. Favors pectate, the anion, over pectin, the methyl ester. This Emericella nidulans (strain FGSC A4 / ATCC 38163 / CBS 112.46 / NRRL 194 / M139) (Aspergillus nidulans) protein is Pectate lyase E (plyE).